The chain runs to 537 residues: MKCNQCEQTAANDSCTNIGVCGKTDNVSHLQDVLIYALRRLAHAALSARAKGIIVPEIDFFTVQALFITLTNVNFDPNVIERFIEQAIINRKTFAQLRGCKIDNSTRPIEEVKSMMSMPTGIDDFHKDKNNCSAMQMLLYGLKGTSAYAYHAAVLGKDDPNLYEFIYEGLAAGFPDREGNIDKERTLSDWMDLVLRCGKSNLRAMELLESGNVESFGVPTSTKVSLGQKKGKAILVSGHDLKDLYDLLCQTEGTGINIYTHGEMLPAHGYPKLHAFTHLVGHYGTAWQNQHKEISLFPGPVLFTTNCIQNPKEYIENVFTSGVTGWPGVQHCKDGDYSKLIERAKELPGFSEDVPGKELLTGFGKQSLLDAAPVILDSIKSGVLQHIFLVGGCDGAKPGRNYYSEFVEKAPDNTVVLTLGCGKFRFFDKDLGMIGSLPRLIDMGQCNDAYAALQVVTALAEILDCGVNDLPVSLVLSWYEQKAVSILLTLLAAGVKGIRLGPSLPSFVSEDILQLLVKEWGIAPITTPDKDIALLMQ.

Residues cysteine 3, cysteine 6, cysteine 15, and cysteine 21 each contribute to the [4Fe-4S] cluster site. Residues histidine 239, glutamate 263, cysteine 307, cysteine 393, cysteine 421, cysteine 446, glutamate 480, and lysine 482 each coordinate hybrid [4Fe-2O-2S] cluster. Cysteine persulfide is present on cysteine 393.

This sequence belongs to the HCP family. [4Fe-4S] cluster is required as a cofactor. The cofactor is hybrid [4Fe-2O-2S] cluster.

It is found in the cytoplasm. It catalyses the reaction A + NH4(+) + H2O = hydroxylamine + AH2 + H(+). Its function is as follows. Catalyzes the reduction of hydroxylamine to form NH(3) and H(2)O. This Lawsonia intracellularis (strain PHE/MN1-00) protein is Hydroxylamine reductase.